Reading from the N-terminus, the 166-residue chain is Peptide deformylase (166 aa).

2 residues coordinate Fe cation: C88 and H130. The active site involves E131. H134 is a Fe cation binding site.

Belongs to the polypeptide deformylase family. Fe(2+) serves as cofactor.

The catalysed reaction is N-terminal N-formyl-L-methionyl-[peptide] + H2O = N-terminal L-methionyl-[peptide] + formate. In terms of biological role, removes the formyl group from the N-terminal Met of newly synthesized proteins. Requires at least a dipeptide for an efficient rate of reaction. N-terminal L-methionine is a prerequisite for activity but the enzyme has broad specificity at other positions. The polypeptide is Peptide deformylase (Caldicellulosiruptor bescii (strain ATCC BAA-1888 / DSM 6725 / KCTC 15123 / Z-1320) (Anaerocellum thermophilum)).